The sequence spans 258 residues: Proteasome subunit alpha (258 aa).

It belongs to the peptidase T1A family. The 20S proteasome core is composed of 14 alpha and 14 beta subunits that assemble into four stacked heptameric rings, resulting in a barrel-shaped structure. The two inner rings, each composed of seven catalytic beta subunits, are sandwiched by two outer rings, each composed of seven alpha subunits. The catalytic chamber with the active sites is on the inside of the barrel. Has a gated structure, the ends of the cylinder being occluded by the N-termini of the alpha-subunits. Is capped by the proteasome-associated ATPase, ARC.

The protein resides in the cytoplasm. Its pathway is protein degradation; proteasomal Pup-dependent pathway. Its activity is regulated as follows. The formation of the proteasomal ATPase ARC-20S proteasome complex, likely via the docking of the C-termini of ARC into the intersubunit pockets in the alpha-rings, may trigger opening of the gate for substrate entry. Interconversion between the open-gate and close-gate conformations leads to a dynamic regulation of the 20S proteasome proteolysis activity. Component of the proteasome core, a large protease complex with broad specificity involved in protein degradation. This chain is Proteasome subunit alpha, found in Nocardia farcinica (strain IFM 10152).